A 64-amino-acid chain; its full sequence is Mitotic-spindle organizing protein 1 (64 aa).

Belongs to the MOZART1 family. As to quaternary structure, part of the gamma-tubulin complex. Interacts directly with alp6/GPC3.

The protein resides in the cytoplasm. It is found in the cytoskeleton. It localises to the microtubule organizing center. Its subcellular location is the spindle pole body. Required for gamma-tubulin complex recruitment to the microtubule organizing center (MTOC). This chain is Mitotic-spindle organizing protein 1 (mzt1), found in Schizosaccharomyces pombe (strain 972 / ATCC 24843) (Fission yeast).